The following is a 183-amino-acid chain: Large ribosomal subunit protein bL32m (183 aa).

A mitochondrion-targeting transit peptide spans 1-71 (MNSLIFGKQL…DFFSNNGILL (71 aa)). Zn(2+) is bound by residues Cys104, Cys107, Cys117, and Cys120.

Belongs to the bacterial ribosomal protein bL32 family. In terms of assembly, component of the mitochondrial large ribosomal subunit (mt-LSU). Mature yeast 74S mitochondrial ribosomes consist of a small (37S) and a large (54S) subunit. The 37S small subunit contains a 15S ribosomal RNA (15S mt-rRNA) and 34 different proteins. The 54S large subunit contains a 21S rRNA (21S mt-rRNA) and 46 different proteins. bL32m has a zinc binding site. Post-translationally, MRPL32 precursor is processed by the m-AAA protease (composed of YTA12/RCA1 and YTA10/AFG3), which cleaves the N-terminal transit peptide. Cleavage by the m-AAA protease takes place prior to assembly into the large subunit, an essential step for mitochondrial ribosome (mitoribosome) assembly. Proper processing by the m-AAA protease is dependent on the zinc-binding region within the tightly folded C-terminal domain of MRPL32: zinc-dependent folding halts degradation initiated from the N-terminus and triggers the release of mature MRPL32.

It is found in the mitochondrion. In terms of biological role, component of the mitochondrial ribosome (mitoribosome), a dedicated translation machinery responsible for the synthesis of mitochondrial genome-encoded proteins, including at least some of the essential transmembrane subunits of the mitochondrial respiratory chain. The mitoribosomes are attached to the mitochondrial inner membrane and translation products are cotranslationally integrated into the membrane. The protein is Large ribosomal subunit protein bL32m of Saccharomyces cerevisiae (strain ATCC 204508 / S288c) (Baker's yeast).